Reading from the N-terminus, the 242-residue chain is MAGHSKWANIQHKKARQDAKRGKIFTRLIKEITVAARMGGGDPGANPRLRLALEKAAENNMPKDNVQRAIDKGTGNLEGVEYIELRYEGYGIGGAALMVDCLTDNKTRTVADVRHAFTKNGGNLGTDGCVAFNFVHQGYLVFEPGVDEDELMEAALEAGAEDVVTNDDGSIEVITAPNDWAGVKSALEAAGYKSVDGDVTMRAQNETELSGDDAVKMQKLIDALEDLDDVQDVYTSAVLNLD.

It belongs to the TACO1 family.

The protein localises to the cytoplasm. This is Probable transcriptional regulatory protein NGO_1291 from Neisseria gonorrhoeae (strain ATCC 700825 / FA 1090).